The primary structure comprises 440 residues: NADH-quinone oxidoreductase subunit D (440 aa).

The protein belongs to the complex I 49 kDa subunit family. NDH-1 is composed of 14 different subunits. Subunits NuoB, C, D, E, F, and G constitute the peripheral sector of the complex.

The protein localises to the cell membrane. It catalyses the reaction a quinone + NADH + 5 H(+)(in) = a quinol + NAD(+) + 4 H(+)(out). Its function is as follows. NDH-1 shuttles electrons from NADH, via FMN and iron-sulfur (Fe-S) centers, to quinones in the respiratory chain. The immediate electron acceptor for the enzyme in this species is believed to be a menaquinone. Couples the redox reaction to proton translocation (for every two electrons transferred, four hydrogen ions are translocated across the cytoplasmic membrane), and thus conserves the redox energy in a proton gradient. This is NADH-quinone oxidoreductase subunit D from Mycobacterium bovis (strain ATCC BAA-935 / AF2122/97).